The sequence spans 470 residues: Phosphoribosylamine--glycine ligase (470 aa).

The 240-residue stretch at 115-354 (KDFLKRIGVP…MAEISMAVVE (240 aa)) folds into the ATP-grasp domain. 142-203 (REKFNNGIVV…EERLRGIEVA (62 aa)) contributes to the ATP binding site. Residues Glu-324 and Asn-326 each coordinate Mg(2+).

This sequence belongs to the GARS family. It depends on Mg(2+) as a cofactor. Mn(2+) serves as cofactor.

The catalysed reaction is 5-phospho-beta-D-ribosylamine + glycine + ATP = N(1)-(5-phospho-beta-D-ribosyl)glycinamide + ADP + phosphate + H(+). Its pathway is purine metabolism; IMP biosynthesis via de novo pathway; N(1)-(5-phospho-D-ribosyl)glycinamide from 5-phospho-alpha-D-ribose 1-diphosphate: step 2/2. In Archaeoglobus fulgidus (strain ATCC 49558 / DSM 4304 / JCM 9628 / NBRC 100126 / VC-16), this protein is Phosphoribosylamine--glycine ligase (purD).